A 405-amino-acid polypeptide reads, in one-letter code: Cystathionine gamma-lyase (405 aa).

The substrate site is built by R62, Y114, and R119. N6-(pyridoxal phosphate)lysine is present on K212. Residue E339 participates in substrate binding.

This sequence belongs to the trans-sulfuration enzymes family. Homotetramer. Interacts with CALM in a calcium-dependent manner. It depends on pyridoxal 5'-phosphate as a cofactor. As to expression, highly expressed in liver. Also in muscle and lower expression in most tissues except heart, pituitary gland, spleen, thymus, and vascular tissue, where it is hardly detected.

It is found in the cytoplasm. It catalyses the reaction L,L-cystathionine + H2O = 2-oxobutanoate + L-cysteine + NH4(+). The catalysed reaction is L-cysteine + H2O = hydrogen sulfide + pyruvate + NH4(+) + H(+). The enzyme catalyses L-homocysteine + H2O = 2-oxobutanoate + hydrogen sulfide + NH4(+) + H(+). It carries out the reaction L-homoserine = 2-oxobutanoate + NH4(+). It catalyses the reaction L-selenocystathionine + H2O = L-selenocysteine + 2-oxobutanoate + NH4(+). It functions in the pathway amino-acid biosynthesis; L-cysteine biosynthesis; L-cysteine from L-homocysteine and L-serine: step 2/2. With respect to regulation, inhibited by propargylglycine, trifluoroalanine and aminoethoxyvinylglycine. Catalyzes the last step in the trans-sulfuration pathway from L-methionine to L-cysteine in a pyridoxal-5'-phosphate (PLP)-dependent manner, which consists on cleaving the L,L-cystathionine molecule into L-cysteine, ammonia and 2-oxobutanoate. Part of the L-cysteine derived from the trans-sulfuration pathway is utilized for biosynthesis of the ubiquitous antioxidant glutathione. Besides its role in the conversion of L-cystathionine into L-cysteine, it utilizes L-cysteine and L-homocysteine as substrates (at much lower rates than L,L-cystathionine) to produce the endogenous gaseous signaling molecule hydrogen sulfide (H2S). In vitro, it converts two L-cysteine molecules into lanthionine and H2S, also two L-homocysteine molecules to homolanthionine and H2S, which can be particularly relevant under conditions of severe hyperhomocysteinemia (which is a risk factor for cardiovascular disease, diabetes, and Alzheimer's disease). Lanthionine and homolanthionine are structural homologs of L,L-cystathionine that differ by the absence or presence of an extra methylene group, respectively. Acts as a cysteine-protein sulfhydrase by mediating sulfhydration of target proteins: sulfhydration consists of converting -SH groups into -SSH on specific cysteine residues of target proteins such as GAPDH, PTPN1 and NF-kappa-B subunit RELA, thereby regulating their function. By generating the gasotransmitter H2S, it participates in a number of physiological processes such as vasodilation, bone protection, and inflammation. Plays an essential role in myogenesis by contributing to the biogenesis of H2S in skeletal muscle tissue. Can also accept homoserine as substrate. Catalyzes the elimination of selenocystathionine (which can be derived from the diet) to yield selenocysteine, ammonia and 2-oxobutanoate. This chain is Cystathionine gamma-lyase (CTH), found in Homo sapiens (Human).